Here is a 242-residue protein sequence, read N- to C-terminus: Putative serine/threonine-protein kinase (242 aa).

The 194-residue stretch at Phe-49–Leu-242 folds into the Protein kinase domain. Residues Val-55 to Val-63 and Lys-77 contribute to the ATP site. The active-site Proton acceptor is Asp-177.

This sequence belongs to the protein kinase superfamily. Ser/Thr protein kinase family.

It carries out the reaction L-seryl-[protein] + ATP = O-phospho-L-seryl-[protein] + ADP + H(+). The enzyme catalyses L-threonyl-[protein] + ATP = O-phospho-L-threonyl-[protein] + ADP + H(+). The polypeptide is Putative serine/threonine-protein kinase (Helianthus annuus (Common sunflower)).